The primary structure comprises 698 residues: Dual trans-enoyl reductase/FAD-dependent monooxygenase tazHJ (698 aa).

Residues serine 54 to threonine 57, serine 78 to histidine 81, tyrosine 96, and isoleucine 279 to alanine 280 contribute to the NADP(+) site. Residues glutamate 299, glycine 312, and arginine 372 each contribute to the FAD site. Residue arginine 455 is part of the active site. Aspartate 571 and alanine 584 together coordinate FAD.

The protein in the N-terminal section; belongs to the zinc-containing alcohol dehydrogenase family. It in the C-terminal section; belongs to the paxM FAD-dependent monooxygenase family.

It functions in the pathway secondary metabolite biosynthesis. Dual trans-enoyl reductase/FAD-dependent monooxygenase; part of the gene cluster that mediates the biosynthesis of azaterrilone A and other azaphilones, a class of fungal metabolites characterized by a highly oxygenated pyrano-quinone bicyclic core and exhibiting a broad range of bioactivities. The first step of the pathway begins with the non-reducing polyketide synthase tazA that assembles one acetyl-CoA starter unit, five malonyl-CoA units, and catalyzes a series of Claisen condensations, methylation, PT-mediated cyclization, and finally releases the first hexaketide precursor through the R-domain. The tazA product then undergoes reduction on its terminal ketone and the following pyran-ring formation by yet undetermined enzyme(s). Dehydration and enoyl reduction, possibly involving the trans-enoyl reductase tazE leads to the next intermediate. TazD is predicted as an acetyltransferase and might catalyze the acetylation steps leading to the synthesis of azaterrilone A. Azaterrilone A is not the final product of the taz pathway and both the highly reducing polyketide synthase tazB and the dual enzyme tazHJ catalyze late steps of the pathway, leading to the production of the 2 final stereoisomers that contain additional polyketide modification whose structures have still to be determined. This chain is Dual trans-enoyl reductase/FAD-dependent monooxygenase tazHJ, found in Aspergillus terreus (strain NIH 2624 / FGSC A1156).